A 234-amino-acid polypeptide reads, in one-letter code: (5-formylfuran-3-yl)methyl phosphate synthase (234 aa).

Residue Lys-27 is the Schiff-base intermediate with substrate of the active site. Lys-85 functions as the Proton acceptor in the catalytic mechanism.

This sequence belongs to the MfnB family.

It carries out the reaction 2 D-glyceraldehyde 3-phosphate = 4-(hydroxymethyl)-2-furancarboxaldehyde phosphate + phosphate + 2 H2O. It participates in cofactor biosynthesis; methanofuran biosynthesis. Catalyzes the formation of 4-(hydroxymethyl)-2-furancarboxaldehyde phosphate (4-HFC-P) from two molecules of glyceraldehyde-3-P (GA-3-P). In Methanosarcina mazei (strain ATCC BAA-159 / DSM 3647 / Goe1 / Go1 / JCM 11833 / OCM 88) (Methanosarcina frisia), this protein is (5-formylfuran-3-yl)methyl phosphate synthase.